A 375-amino-acid polypeptide reads, in one-letter code: N5-carboxyaminoimidazole ribonucleotide synthase (375 aa).

Residues arginine 108, lysine 148, 153-159 (GYDGKGQ), 183-186 (EQYL), glutamate 191, histidine 214, and 266-267 (NE) contribute to the ATP site. The ATP-grasp domain occupies 112–296 (KQTLLEANTQ…QFDTHILAIT (185 aa)).

Belongs to the PurK/PurT family. In terms of assembly, homodimer.

The catalysed reaction is 5-amino-1-(5-phospho-beta-D-ribosyl)imidazole + hydrogencarbonate + ATP = 5-carboxyamino-1-(5-phospho-D-ribosyl)imidazole + ADP + phosphate + 2 H(+). It functions in the pathway purine metabolism; IMP biosynthesis via de novo pathway; 5-amino-1-(5-phospho-D-ribosyl)imidazole-4-carboxylate from 5-amino-1-(5-phospho-D-ribosyl)imidazole (N5-CAIR route): step 1/2. Its function is as follows. Catalyzes the ATP-dependent conversion of 5-aminoimidazole ribonucleotide (AIR) and HCO(3)(-) to N5-carboxyaminoimidazole ribonucleotide (N5-CAIR). In Staphylococcus epidermidis (strain ATCC 35984 / DSM 28319 / BCRC 17069 / CCUG 31568 / BM 3577 / RP62A), this protein is N5-carboxyaminoimidazole ribonucleotide synthase.